Reading from the N-terminus, the 336-residue chain is Cytoskeleton protein RodZ (336 aa).

At 1-111 the chain is on the cytoplasmic side; that stretch reads MNTEATHDQN…LGKRRKKRDG (111 aa). The 53-residue stretch at 19–71 folds into the HTH cro/C1-type domain; it reads LRNAREQLGLSQQAVAERLCLKVSTVRDIEEDKAPADLASTFLRGYIRSYARL. A DNA-binding region (H-T-H motif) is located at residues 30-49; the sequence is QQAVAERLCLKVSTVRDIEE. Residues 112 to 132 form a helical; Signal-anchor for type II membrane protein membrane-spanning segment; sequence WLMTFTWLVLFVVIGLSGAWW. Residues 133–336 are Periplasmic-facing; sequence WQDHKAQQEE…TLNAEQSPAQ (204 aa). Over residues 148-164 the composition is skewed to polar residues; the sequence is DQSSAELNNNQSQSVPL. The interval 148 to 245 is disordered; that stretch reads DQSSAELNNN…PLPTDQAGVT (98 aa). Residues 165–201 show a composition bias toward low complexity; it reads DTSTTTDQAMATTPTSPVDTTATNTQTPAATTAPSPT. Residues 202-217 are compositionally biased toward polar residues; the sequence is VDSQQNAVVPPSQANV. Residues 218–240 show a composition bias toward low complexity; that stretch reads DTAATPAPAATTTPDGAAPLPTD.

It belongs to the RodZ family.

It localises to the cell inner membrane. In terms of biological role, cytoskeletal protein that is involved in cell-shape control through regulation of the length of the long axis. The chain is Cytoskeleton protein RodZ from Escherichia coli O7:K1 (strain IAI39 / ExPEC).